Here is a 347-residue protein sequence, read N- to C-terminus: D-alanine--D-alanine ligase (347 aa).

One can recognise an ATP-grasp domain in the interval 131 to 333 (KRVLESAGIA…YPKLIERLVD (203 aa)). 161 to 216 (EEKLAYPVFTKPSNMGSSVGISKSENQEELRQALKLAFRYDSRVLVEQGVNAREIE) serves as a coordination point for ATP. The Mg(2+) site is built by D287, E300, and N302.

Belongs to the D-alanine--D-alanine ligase family. Mg(2+) serves as cofactor. The cofactor is Mn(2+).

It is found in the cytoplasm. It carries out the reaction 2 D-alanine + ATP = D-alanyl-D-alanine + ADP + phosphate + H(+). It functions in the pathway cell wall biogenesis; peptidoglycan biosynthesis. Functionally, cell wall formation. The sequence is that of D-alanine--D-alanine ligase from Streptococcus pneumoniae serotype 4 (strain ATCC BAA-334 / TIGR4).